Here is a 626-residue protein sequence, read N- to C-terminus: E3 ubiquitin-protein ligase HRD1 (626 aa).

The N-terminal stretch at 1–15 (MQLLLSSVCMALTSA) is a signal peptide. The Lumenal portion of the chain corresponds to 16–38 (VIGFAYYQKQQFYPAVVYITKSN). Residues 39 to 59 (ASMGVIYIQFFVIVFMFGKLL) form a helical membrane-spanning segment. At 60 to 96 (SKIFLGTLRAAEFEHLLERFWYALTETCLAFTVFRDD) the chain is on the cytoplasmic side. The helical transmembrane segment at 97-117 (FNPRFVALFTVLLFLKSFHWL) threads the bilayer. Topologically, residues 118-128 (AEERVDFMERS) are lumenal. A helical transmembrane segment spans residues 129–149 (PVLGWLFHIRVGSLLTVLGIL). Residues 150 to 167 (DYVLLIHAYNSTLVRGPT) are Cytoplasmic-facing. A helical transmembrane segment spans residues 168–188 (VQLVFGFEYAILLTVIASTAI). At 189–222 (KYVLHAAEMRTDTPWENKAVFLLYTELVIGLIKV) the chain is on the lumenal side. A helical transmembrane segment spans residues 223–243 (VLYILFVVIMAKIYALPMFVF). Residues 234 to 268 (KIYALPMFVFRPMFFTIRNFRKALNDVIMSRRAIR) form an interaction with p53/TP53 region. The Cytoplasmic segment spans residues 244-626 (RPMFFTIRNF…AATNERTTAE (383 aa)). The RING-type; atypical zinc-finger motif lies at 289–328 (CIICREDMVNHSKKLPCGHIFHTTCLRSWFQRQQTCPTCR). The segment at 569–600 (DADEDDIPSTATEAVSIPNSDADFEENSSELG) is disordered. Over residues 577 to 587 (STATEAVSIPN) the composition is skewed to polar residues.

It belongs to the HRD1 family. As to quaternary structure, homodimer. Interacts with p53. May interact with Septin2.

The protein resides in the endoplasmic reticulum membrane. The catalysed reaction is S-ubiquitinyl-[E2 ubiquitin-conjugating enzyme]-L-cysteine + [acceptor protein]-L-lysine = [E2 ubiquitin-conjugating enzyme]-L-cysteine + N(6)-ubiquitinyl-[acceptor protein]-L-lysine.. It functions in the pathway protein modification; protein ubiquitination. Its function is as follows. Acts as an E3 ubiquitin-protein ligase which accepts ubiquitin specifically from endoplasmic reticulum-associated UBC7 E2 ligase and transfers it to substrates, promoting their degradation. Component of the endoplasmic reticulum quality control (ERQC) system also called ER-associated degradation (ERAD) involved in ubiquitin-dependent degradation of misfolded endoplasmic reticulum proteins. Also promotes the degradation of normal but naturally short-lived proteins. Protects cells from ER stress-induced apoptosis. Sequesters p53 in the cytoplasm and promotes its degradation, thereby negatively regulating its biological function in transcription, cell cycle regulation and apoptosis. In Drosophila melanogaster (Fruit fly), this protein is E3 ubiquitin-protein ligase HRD1 (sip3).